Consider the following 100-residue polypeptide: NADH-quinone oxidoreductase subunit K (100 aa).

Helical transmembrane passes span 3–23 (PTSY…VGVI), 29–49 (LVLF…LVTF), and 60–80 (IVVF…LALL).

It belongs to the complex I subunit 4L family. As to quaternary structure, NDH-1 is composed of 14 different subunits. Subunits NuoA, H, J, K, L, M, N constitute the membrane sector of the complex.

It is found in the cell membrane. The catalysed reaction is a quinone + NADH + 5 H(+)(in) = a quinol + NAD(+) + 4 H(+)(out). In terms of biological role, NDH-1 shuttles electrons from NADH, via FMN and iron-sulfur (Fe-S) centers, to quinones in the respiratory chain. The immediate electron acceptor for the enzyme in this species is believed to be ubiquinone. Couples the redox reaction to proton translocation (for every two electrons transferred, four hydrogen ions are translocated across the cytoplasmic membrane), and thus conserves the redox energy in a proton gradient. The polypeptide is NADH-quinone oxidoreductase subunit K (Roseiflexus castenholzii (strain DSM 13941 / HLO8)).